A 129-amino-acid polypeptide reads, in one-letter code: Nif-specific regulatory protein (129 aa).

The region spanning Glu1 to Ile46 is the Sigma-54 factor interaction domain. Residues Gln101 to Ile129 constitute a DNA-binding region (H-T-H motif).

As to quaternary structure, interacts with sigma-54.

Its function is as follows. Required for activation of most nif operons, which are directly involved in nitrogen fixation. This chain is Nif-specific regulatory protein (nifA), found in Azotobacter chroococcum mcd 1.